The primary structure comprises 208 residues: Interleukin-6 (208 aa).

An N-terminal signal peptide occupies residues 1 to 27 (MTFLSTSAFSPLAFSLGLLLVVATAFP). Cysteine 68 and cysteine 74 form a disulfide bridge. Position 77 is a phosphoserine (serine 77). A disulfide bridge connects residues cysteine 97 and cysteine 107.

Belongs to the IL-6 superfamily. Component of a hexamer of two molecules each of IL6, IL6R and IL6ST; first binds to IL6R to associate with the signaling subunit IL6ST. Interacts with IL6R (via the N-terminal ectodomain); this interaction may be affected by IL6R-binding with SORL1, hence decreasing IL6 cis signaling. Interacts with SORL1 (via the N-terminal ectodomain); this interaction leads to IL6 internalization and lysosomal degradation. May form a trimeric complex with the soluble SORL1 ectodomain and soluble IL6R receptor; this interaction might stabilize circulating IL6, hence promoting IL6 trans signaling.

The protein resides in the secreted. Cytokine with a wide variety of biological functions in immunity, tissue regeneration, and metabolism. Binds to IL6R, then the complex associates to the signaling subunit IL6ST/gp130 to trigger the intracellular IL6-signaling pathway. The interaction with the membrane-bound IL6R and IL6ST stimulates 'classic signaling', whereas the binding of IL6 and soluble IL6R to IL6ST stimulates 'trans-signaling'. Alternatively, 'cluster signaling' occurs when membrane-bound IL6:IL6R complexes on transmitter cells activate IL6ST receptors on neighboring receiver cells. Its function is as follows. IL6 is a potent inducer of the acute phase response. Rapid production of IL6 contributes to host defense during infection and tissue injury, but excessive IL6 synthesis is involved in disease pathology. In the innate immune response, is synthesized by myeloid cells, such as macrophages and dendritic cells, upon recognition of pathogens through toll-like receptors (TLRs) at the site of infection or tissue injury. In the adaptive immune response, is required for the differentiation of B cells into immunoglobulin-secreting cells. Plays a major role in the differentiation of CD4(+) T cell subsets. Essential factor for the development of T follicular helper (Tfh) cells that are required for the induction of germinal-center formation. Required to drive naive CD4(+) T cells to the Th17 lineage. Also required for proliferation of myeloma cells and the survival of plasmablast cells. In terms of biological role, acts as an essential factor in bone homeostasis and on vessels directly or indirectly by induction of VEGF, resulting in increased angiogenesis activity and vascular permeability. Induces, through 'trans-signaling' and synergistically with IL1B and TNF, the production of VEGF. Involved in metabolic controls, is discharged into the bloodstream after muscle contraction increasing lipolysis and improving insulin resistance. 'Trans-signaling' in central nervous system also regulates energy and glucose homeostasis. Mediates, through GLP-1, crosstalk between insulin-sensitive tissues, intestinal L cells and pancreatic islets to adapt to changes in insulin demand. Also acts as a myokine. Plays a protective role during liver injury, being required for maintenance of tissue regeneration. Also has a pivotal role in iron metabolism by regulating HAMP/hepcidin expression upon inflammation or bacterial infection. Through activation of IL6ST-YAP-NOTCH pathway, induces inflammation-induced epithelial regeneration. This is Interleukin-6 (IL6) from Felis catus (Cat).